The following is a 780-amino-acid chain: Myosin heavy chain kinase C (780 aa).

The 204-residue stretch at 40-243 (IGDDLKPKWT…VCDFLKLKPI (204 aa)) folds into the Alpha-type protein kinase domain. Residues 310–495 (RIRAQQQQKS…MEQTPDRSEF (186 aa)) are disordered. The span at 337–350 (QQSPSSPTSKPVPQ) shows a compositional bias: low complexity. Positions 353–376 (KTPSQSNVVNKSPVSPPKENSNVK) are enriched in polar residues. The segment covering 380–436 (DNINNNNSSISSNNDNSNNNNNNNDNINNSSNSSSVNSNSSSVSSSSSSSSSSSSSS) has biased composition (low complexity). Polar residues predominate over residues 437–450 (TTNAAPISIQVSRN). Positions 458–488 (IQPSSAAASASSTSSSNVPTPESTSTSSMEQ) are enriched in low complexity. WD repeat units lie at residues 507–546 (DTVR…HVTN), 549–589 (AHGK…TIKE), 591–628 (KESN…CVKT), 631–668 (GHTR…ILTN), 671–708 (GHEG…CVNT), and 748–780 (NTRS…WDKM).

Belongs to the protein kinase superfamily. Alpha-type protein kinase family. ALPK subfamily. In terms of assembly, interacts with myosin II heavy chain (mhcA). Autophosphorylated in vitro.

The protein resides in the cytoplasm. It localises to the cell cortex. It is found in the membrane. The protein localises to the cleavage furrow. It carries out the reaction L-threonyl-[myosin heavy-chain] + ATP = O-phospho-L-threonyl-[myosin heavy-chain] + ADP + H(+). Phosphorylates threonine at 'Thr-1823', 'Thr-1833' and 'Thr-2029' in the C-terminal tail region of myosin II heavy chain (mhcA). This phosphorylation is critical in actin-activated ATPase activity of the myosin and regulating the assembly and disassembly of myosin II filament. In vitro, catalytic domain phosphorylates mhcA, myelin basic protein, myosin regulatory light chain, casein and caldesmon. Drives the disassembly of myosin II filaments for efficient cytokinesis and recycling of myosin II that occurs during late cytokinesis. Can be activated in vitro by autophosphorylation. The polypeptide is Myosin heavy chain kinase C (mhkC) (Dictyostelium discoideum (Social amoeba)).